Consider the following 185-residue polypeptide: Hypoxanthine/guanine phosphoribosyltransferase (185 aa).

The protein belongs to the purine/pyrimidine phosphoribosyltransferase family. Archaeal HPRT subfamily. In terms of assembly, homodimer.

The protein localises to the cytoplasm. The enzyme catalyses IMP + diphosphate = hypoxanthine + 5-phospho-alpha-D-ribose 1-diphosphate. It carries out the reaction GMP + diphosphate = guanine + 5-phospho-alpha-D-ribose 1-diphosphate. It functions in the pathway purine metabolism; IMP biosynthesis via salvage pathway; IMP from hypoxanthine: step 1/1. Functionally, catalyzes a salvage reaction resulting in the formation of IMP that is energically less costly than de novo synthesis. This Methanococcus maripaludis (strain C7 / ATCC BAA-1331) protein is Hypoxanthine/guanine phosphoribosyltransferase.